The chain runs to 395 residues: Immunity-related GTPase family M protein 2 (395 aa).

The region spanning 63-239 is the IRG-type G domain; that stretch reads NKIKIAVTGD…PKLRETLQKD (177 aa). GTP contacts are provided by residues 72–79, 97–101, and 179–181; these read DSGNGMSS, TGVVR, and KLD.

Belongs to the TRAFAC class dynamin-like GTPase superfamily. IRG family. Ubiquitinated; polyubiquitinated in the cytosol, promoting Gbp1 recruitment to the T.gondii parasitophorous vacuole membranes.

The protein localises to the cytoplasmic vesicle membrane. It is found in the golgi apparatus membrane. It localises to the cytoplasm. The protein resides in the cytosol. It catalyses the reaction GTP + H2O = GDP + phosphate + H(+). Its function is as follows. Immunity-related GTPase that plays important roles in innate immunity and inflammatory response. Acts as a dynamin-like protein that binds to intracellular membranes and promotes remodeling and trafficking of those membranes. Required for clearance of acute protozoan and bacterial infections. Acts by participating to Tgtp1/Irgb6 and Gbp1-mediated parasite killing by promoting their accumulation on the T.gondii parasitophorous vacuole membranes. Also required for prolonged loading of ubiquitin and p62/Sqstm1 to parasitophorous vacuole membranes. Also acts as a key negative regulator of the inflammatory response by inhibiting the non-canonical inflammasome, thereby protecting against Casp11-driven septic shock during endotoxemia. In Mus musculus (Mouse), this protein is Immunity-related GTPase family M protein 2.